Consider the following 340-residue polypeptide: S-adenosylmethionine:tRNA ribosyltransferase-isomerase (340 aa).

Belongs to the QueA family. In terms of assembly, monomer.

It is found in the cytoplasm. It catalyses the reaction 7-aminomethyl-7-carbaguanosine(34) in tRNA + S-adenosyl-L-methionine = epoxyqueuosine(34) in tRNA + adenine + L-methionine + 2 H(+). It participates in tRNA modification; tRNA-queuosine biosynthesis. Transfers and isomerizes the ribose moiety from AdoMet to the 7-aminomethyl group of 7-deazaguanine (preQ1-tRNA) to give epoxyqueuosine (oQ-tRNA). This Aliarcobacter butzleri (strain RM4018) (Arcobacter butzleri) protein is S-adenosylmethionine:tRNA ribosyltransferase-isomerase.